The sequence spans 612 residues: Poly(A) RNA polymerase, mitochondrial (612 aa).

The transit peptide at 1-57 (MNSLVRRSAQQLSLWRTYCIKHNASEAASPGRNAGRPNYEEFIGRHQRQAQCSIVVQ) directs the protein to the mitochondrion. ATP contacts are provided by residues 83–89 (YCVRQDE) and 228–229 (GC). The Mg(2+) site is built by aspartate 230 and aspartate 232. The region spanning 427–463 (SLSELLLQFFEFYSQFDFHNRAISLNEGKPLSKPDHS) is the PAP-associated domain. 2 disordered regions span residues 555 to 574 (AGAT…KSAS) and 588 to 612 (SELK…RRSR).

This sequence belongs to the DNA polymerase type-B-like family. It depends on Mg(2+) as a cofactor. Requires Mn(2+) as cofactor.

The protein resides in the mitochondrion. The catalysed reaction is RNA(n) + ATP = RNA(n)-3'-adenine ribonucleotide + diphosphate. Its function is as follows. Polymerase that creates the 3' poly(A) tail of mitochondrial transcripts. This is not required for transcript stability or translation but may maintain mRNA integrity by protecting 3' termini from degradation. This chain is Poly(A) RNA polymerase, mitochondrial, found in Drosophila melanogaster (Fruit fly).